The sequence spans 95 residues: Small ribosomal subunit protein bS6 (95 aa).

Belongs to the bacterial ribosomal protein bS6 family.

Functionally, binds together with bS18 to 16S ribosomal RNA. This is Small ribosomal subunit protein bS6 from Nocardia farcinica (strain IFM 10152).